The primary structure comprises 170 residues: VIP peptides (170 aa).

A signal peptide spans 1–20; sequence MDTRNKAQLLVLLTLLSVLF. Residues 21–79 constitute a propeptide that is removed on maturation; sequence SQTSAWPLYRAPSALRLGDRIPFEGANEPDQVSLKEDIDMLQNALAENDTPYYDVSRNA. A Phosphoserine modification is found at S76. A Methionine amide modification is found at M107. Residue N152 is modified to Asparagine amide. Residues 156-170 constitute a propeptide that is removed on maturation; the sequence is SSEGESPDFPEELEK.

The protein belongs to the glucagon family.

The protein localises to the secreted. VIP is a neuropeptide involved in a diverse array of physiological processes through activating the PACAP subfamily of class B1 G protein-coupled receptors: VIP receptor 1 (VPR1) and VIP receptor 2 (VPR2). Abundantly expressed throughout the CNS and peripheral nervous systems where they primarily exert neuroprotective and immune modulatory roles. Also causes vasodilation, lowers arterial blood pressure, stimulates myocardial contractility, increases glycogenolysis and relaxes the smooth muscle of trachea, stomach and gall bladder. Functionally, PHM-27 and PHV-42 are two bioactive forms from proteolysis of the same precursor protein, that cause vasodilation. PHM-27 is a potent agonist of the calcitonin receptor CALCR, with similar efficacy as calcitonin. The chain is VIP peptides from Homo sapiens (Human).